Here is a 458-residue protein sequence, read N- to C-terminus: RuvB-like helicase 1 (458 aa).

The segment covering 1-18 (MVQITEVKENQSSRESRT) has biased composition (basic and acidic residues). Positions 1-20 (MVQITEVKENQSSRESRTAA) are disordered. Position 73–80 (73–80 (GPPATGKT)) interacts with ATP.

Belongs to the RuvB family. As to quaternary structure, may form heterododecamers with RVB2. Component of the SWR1 chromatin remodeling complex, the INO80 chromatin remodeling complex, and of the R2TP complex.

It is found in the nucleus. The catalysed reaction is ATP + H2O = ADP + phosphate + H(+). Its function is as follows. DNA helicase which participates in several chromatin remodeling complexes, including the SWR1 and the INO80 complexes. The SWR1 complex mediates the ATP-dependent exchange of histone H2A for the H2A variant HZT1 leading to transcriptional regulation of selected genes by chromatin remodeling. The INO80 complex remodels chromatin by shifting nucleosomes and is involved in DNA repair. Also involved in pre-rRNA processing. The protein is RuvB-like helicase 1 (RVB1) of Candida albicans (strain SC5314 / ATCC MYA-2876) (Yeast).